We begin with the raw amino-acid sequence, 427 residues long: Isocitrate lyase (427 aa).

Residue 89-91 (SGW) coordinates substrate. Mg(2+) is bound at residue Asp-150. Cys-188 serves as the catalytic Proton acceptor. Substrate contacts are provided by residues 189 to 190 (GH), Arg-225, 310 to 314 (NCSPS), and Thr-344.

Belongs to the isocitrate lyase/PEP mutase superfamily. Isocitrate lyase family. In terms of assembly, homotetramer. The cofactor is Mg(2+).

The enzyme catalyses D-threo-isocitrate = glyoxylate + succinate. The protein operates within carbohydrate metabolism; glyoxylate cycle; (S)-malate from isocitrate: step 1/2. In terms of biological role, involved in the metabolic adaptation in response to environmental changes. Catalyzes the reversible formation of succinate and glyoxylate from isocitrate, a key step of the glyoxylate cycle, which operates as an anaplerotic route for replenishing the tricarboxylic acid cycle during growth on fatty acid substrates. The protein is Isocitrate lyase (aceA) of Halalkalibacterium halodurans (strain ATCC BAA-125 / DSM 18197 / FERM 7344 / JCM 9153 / C-125) (Bacillus halodurans).